The chain runs to 195 residues: Peptidyl-tRNA hydrolase (195 aa).

Tyr17 is a tRNA binding site. His22 acts as the Proton acceptor in catalysis. Residues Tyr68, Asn70, and Asn116 each coordinate tRNA.

Belongs to the PTH family. Monomer.

Its subcellular location is the cytoplasm. The enzyme catalyses an N-acyl-L-alpha-aminoacyl-tRNA + H2O = an N-acyl-L-amino acid + a tRNA + H(+). Functionally, hydrolyzes ribosome-free peptidyl-tRNAs (with 1 or more amino acids incorporated), which drop off the ribosome during protein synthesis, or as a result of ribosome stalling. In terms of biological role, catalyzes the release of premature peptidyl moieties from peptidyl-tRNA molecules trapped in stalled 50S ribosomal subunits, and thus maintains levels of free tRNAs and 50S ribosomes. This is Peptidyl-tRNA hydrolase from Shewanella sp. (strain ANA-3).